A 443-amino-acid polypeptide reads, in one-letter code: L-ornithine N(5)-monooxygenase (443 aa).

Residues 45 to 53 and Gln64 contribute to the FAD site; that span reads DKQGDYRWH. Lys69 serves as a coordination point for substrate. Position 130 (Val130) interacts with FAD. Residues 215–218 and Arg240 each bind NADP(+); that span reads GGQS. Substrate contacts are provided by residues 254–257 and Asn284; that span reads NEVF. NADP(+) is bound at residue 284–286; the sequence is NYS. FAD is bound at residue 407–409; sequence TLL. Ser410 contacts substrate.

Belongs to the lysine N(6)-hydroxylase/L-ornithine N(5)-oxygenase family. In terms of assembly, homotetramer. It depends on FAD as a cofactor.

It is found in the cell inner membrane. The enzyme catalyses L-ornithine + NADPH + O2 = N(5)-hydroxy-L-ornithine + NADP(+) + H2O. It participates in siderophore biosynthesis; pyoverdin biosynthesis. Functionally, catalyzes the conversion of L-ornithine to N(5)-hydroxyornithine, the first step in the biosynthesis of all hydroxamate-containing siderophores, such as pyoverdin. Pyoverdin is a hydroxamate siderophore composed of a 6,7-dihydroxyquinoline-containing fluorescent chromophore joined to the N-terminus of a partly cyclic octapeptide (D-Ser-L-Arg-D-Ser-L-N(5)-OH-Orn-L-Lys-L-N(5)-OH-Orn-L-Thr-L-Thr in strain PAO1). Specific for NADPH, which plays a role in stabilization of the C4a-hydroperoxyflavin intermediate. The chain is L-ornithine N(5)-monooxygenase from Pseudomonas aeruginosa (strain ATCC 15692 / DSM 22644 / CIP 104116 / JCM 14847 / LMG 12228 / 1C / PRS 101 / PAO1).